We begin with the raw amino-acid sequence, 202 residues long: Orotate phosphoribosyltransferase (202 aa).

113–121 is a binding site for 5-phospho-alpha-D-ribose 1-diphosphate; that stretch reads EDIITTGGS. 2 residues coordinate orotate: Thr-117 and Arg-145.

The protein belongs to the purine/pyrimidine phosphoribosyltransferase family. PyrE subfamily. In terms of assembly, homodimer. Mg(2+) serves as cofactor.

The catalysed reaction is orotidine 5'-phosphate + diphosphate = orotate + 5-phospho-alpha-D-ribose 1-diphosphate. The protein operates within pyrimidine metabolism; UMP biosynthesis via de novo pathway; UMP from orotate: step 1/2. In terms of biological role, catalyzes the transfer of a ribosyl phosphate group from 5-phosphoribose 1-diphosphate to orotate, leading to the formation of orotidine monophosphate (OMP). This chain is Orotate phosphoribosyltransferase, found in Nitratiruptor sp. (strain SB155-2).